The chain runs to 277 residues: S-formylglutathione hydrolase FrmB (277 aa).

Active-site charge relay system residues include Ser-145, Asp-221, and His-254.

The protein belongs to the esterase D family.

It carries out the reaction S-formylglutathione + H2O = formate + glutathione + H(+). In terms of biological role, serine hydrolase involved in the detoxification of formaldehyde. Hydrolyzes S-formylglutathione to glutathione and formate. This is S-formylglutathione hydrolase FrmB (frmB) from Escherichia coli O6:H1 (strain CFT073 / ATCC 700928 / UPEC).